The sequence spans 874 residues: Translation initiation factor IF-2 (874 aa).

A disordered region spans residues 1 to 262 (MEDKNKTIKE…EKSTSDRDFS (262 aa)). A compositionally biased stretch (pro residues) spans 54 to 63 (SKPPVMPLPL). Over residues 83 to 104 (AKREESPGKQDAGRPPRDKDTR) the composition is skewed to basic and acidic residues. A compositionally biased stretch (gly residues) spans 141 to 222 (SGGGYQGNRG…NRGPRSGGTG (82 aa)). Positions 235–244 (LSQSRGSSVT) are enriched in polar residues. Basic and acidic residues predominate over residues 250–262 (HDKEKSTSDRDFS). A tr-type G domain is found at 369–538 (NRPPVVTIMG…LLQAEVMDLK (170 aa)). The interval 378–385 (GHVDHGKT) is G1. 378–385 (GHVDHGKT) contributes to the GTP binding site. The segment at 403–407 (GITQH) is G2. Residues 424-427 (DTPG) are G3. GTP-binding positions include 424–428 (DTPGH) and 478–481 (NKID). Positions 478–481 (NKID) are G4. The interval 514-516 (SAR) is G5.

The protein belongs to the TRAFAC class translation factor GTPase superfamily. Classic translation factor GTPase family. IF-2 subfamily.

It is found in the cytoplasm. One of the essential components for the initiation of protein synthesis. Protects formylmethionyl-tRNA from spontaneous hydrolysis and promotes its binding to the 30S ribosomal subunits. Also involved in the hydrolysis of GTP during the formation of the 70S ribosomal complex. The protein is Translation initiation factor IF-2 of Leptospira interrogans serogroup Icterohaemorrhagiae serovar copenhageni (strain Fiocruz L1-130).